The chain runs to 678 residues: Glycine--tRNA ligase beta subunit (678 aa).

This sequence belongs to the class-II aminoacyl-tRNA synthetase family. In terms of assembly, tetramer of two alpha and two beta subunits.

It localises to the cytoplasm. The catalysed reaction is tRNA(Gly) + glycine + ATP = glycyl-tRNA(Gly) + AMP + diphosphate. This is Glycine--tRNA ligase beta subunit from Streptococcus thermophilus (strain ATCC BAA-491 / LMD-9).